The chain runs to 182 residues: Adenine phosphoribosyltransferase (182 aa).

This sequence belongs to the purine/pyrimidine phosphoribosyltransferase family. Homodimer.

Its subcellular location is the cytoplasm. It carries out the reaction AMP + diphosphate = 5-phospho-alpha-D-ribose 1-diphosphate + adenine. The protein operates within purine metabolism; AMP biosynthesis via salvage pathway; AMP from adenine: step 1/1. Catalyzes a salvage reaction resulting in the formation of AMP, that is energically less costly than de novo synthesis. This Streptomyces galbus protein is Adenine phosphoribosyltransferase.